The chain runs to 318 residues: Tyrosine recombinase XerC (318 aa).

The Core-binding (CB) domain occupies 17–108 (PEVMAERRRW…GLRSFLRYLE (92 aa)). A Tyr recombinase domain is found at 129–312 (SLPKALTDRE…DSARLLEIYD (184 aa)). Residues arginine 172, lysine 196, histidine 264, arginine 267, and histidine 290 contribute to the active site. The active-site O-(3'-phospho-DNA)-tyrosine intermediate is tyrosine 299.

Belongs to the 'phage' integrase family. XerC subfamily. Forms a cyclic heterotetrameric complex composed of two molecules of XerC and two molecules of XerD.

The protein localises to the cytoplasm. Its function is as follows. Site-specific tyrosine recombinase, which acts by catalyzing the cutting and rejoining of the recombining DNA molecules. The XerC-XerD complex is essential to convert dimers of the bacterial chromosome into monomers to permit their segregation at cell division. It also contributes to the segregational stability of plasmids. In Rhizobium meliloti (strain 1021) (Ensifer meliloti), this protein is Tyrosine recombinase XerC.